A 102-amino-acid polypeptide reads, in one-letter code: Citrate lyase acyl carrier protein (102 aa).

Residue Ser14 is modified to O-(phosphoribosyl dephospho-coenzyme A)serine.

It belongs to the CitD family. Oligomer with a subunit composition of (alpha,beta,gamma)6.

It is found in the cytoplasm. Functionally, covalent carrier of the coenzyme of citrate lyase. In Streptococcus pyogenes serotype M18 (strain MGAS8232), this protein is Citrate lyase acyl carrier protein.